The primary structure comprises 308 residues: uncharacterized protein (308 aa).

The 60-residue stretch at 1-60 (MNYSLKQLKVFVTVAQEKSFSRAGERIGLSQSAVSHSVKELENHTGVRLLDRTTREVVLT) folds into the HTH lysR-type domain. Positions 20–39 (FSRAGERIGLSQSAVSHSVK) form a DNA-binding region, H-T-H motif.

It belongs to the LysR transcriptional regulatory family.

This is an uncharacterized protein from Shigella flexneri.